A 261-amino-acid chain; its full sequence is WW domain-binding protein 2 (261 aa).

One can recognise a GRAM domain in the interval 1–84 (MALNKNHSEG…YLMKDCEIKQ (84 aa)). A Phosphotyrosine; by YES and SRC modification is found at Y192. The PPxY motif 1 motif lies at 196–200 (PPPPY). Over residues 196-209 (PPPPYPGPMEPPVS) the composition is skewed to pro residues. Positions 196–261 (PPPPYPGPME…YYPPEDKKTQ (66 aa)) are disordered. Residues 218 to 230 (AAEAKAAEAAASA) show a composition bias toward low complexity. Phosphotyrosine; by YES and SRC is present on Y231. Positions 245–254 (SQPPPPPYYP) are enriched in pro residues. The PPxY motif 2 signature appears at 248 to 252 (PPPPY).

As to quaternary structure, binds to the WW domain of YAP1, WWP1 and WWP2. Interacts with NEDD4. Interacts with ESR1 and UBE3A. Phosphorylated in repsonse to EGF as well as estrogen and progesterone hormones. Tyr-192 and Tyr-231 are phosphorylated by YES and SRC inducing nuclear translocation. As to expression, ubiquitous.

It localises to the cytoplasm. The protein localises to the nucleus. Its function is as follows. Acts as a transcriptional coactivator of estrogen and progesterone receptors (ESR1 and PGR) upon hormone activation. In presence of estrogen, binds to ESR1-responsive promoters. Synergizes with YAP1 to enhance PGR activity. Modulates expression of post-synaptic scaffolding proteins via regulation of ESR1, ESR2 and PGR. This Homo sapiens (Human) protein is WW domain-binding protein 2.